We begin with the raw amino-acid sequence, 1366 residues long: Collagen alpha-2(I) chain (1366 aa).

The signal sequence occupies residues 1–22; sequence MLSFVDTRTLLLLAVTSCLATC. Position 23 is a pyrrolidone carboxylic acid (Q23). Positions 23–79 are cleaved as a propeptide — N-terminal propeptide; sequence QSLQEATARKGPTGDRGPRGERGPPGPPGRDGDDGIPGPPGPPGPPGPPGLGGNFAA. A disordered region spans residues 27-1131; that stretch reads EATARKGPTG…PRSPPSLRPK (1105 aa). The span at 34-44 shows a compositional bias: basic and acidic residues; that stretch reads PTGDRGPRGER. A compositionally biased stretch (pro residues) spans 59–71; that stretch reads PGPPGPPGPPGPP. K84 is subject to Allysine. The segment covering 84-94 has biased composition (gly residues); sequence KGVGLGPGPMG. The segment covering 95-132 has biased composition (low complexity); sequence LMGPRGPPGASGAPGPQGFQGPAGEPGEPGQTGPAGAR. The span at 141-155 shows a compositional bias: basic and acidic residues; that stretch reads AGEDGHPGKPGRPGE. Residue K177 is modified to 5-hydroxylysine; alternate. K177 carries O-linked (Gal...) hydroxylysine; alternate glycosylation. Low complexity-rich tracts occupy residues 225–254, 279–293, 300–321, 330–345, 384–408, 423–434, 470–489, and 513–531; these read VGAP…SAGP, AGPR…VSGP, PGAN…AGAP, PGPV…RGIV, NGEA…RGLP, RGATGPAGVRGP, LPGI…RGEP, and AGLA…NGAQ. Gly residues predominate over residues 538 to 547; sequence GVQGGKGEQG. A compositionally biased stretch (low complexity) spans 594–611; that stretch reads PGESGAAGPSGPIGSRGP. Residues 634-643 show a composition bias toward gly residues; it reads GASGPGGLPG. 2 stretches are compositionally biased toward low complexity: residues 668–690 and 717–737; these read NPGR…AGAT and VGPA…QPGA. Basic and acidic residues predominate over residues 738–747; the sequence is KGERGTKGPK. The span at 756–765 shows a compositional bias: low complexity; that stretch reads TGPIGSAGPS. The span at 775–784 shows a compositional bias: gly residues; it reads GSRGDGGPPG. Low complexity-rich tracts occupy residues 785–795, 863–876, 893–932, 951–974, and 981–1001; these read ATGFPGAAGRT, PQGL…LGLP, EPGP…NPGN, PGNI…PTGK, and PGPA…PSGP. The span at 1005–1016 shows a compositional bias: basic and acidic residues; that stretch reads RGDKGEPGEKGP. Positions 1089–1103 are enriched in pro residues; that stretch reads AGPPGPPGPPGPPGP. A propeptide spans 1120 to 1366 (C-terminal propeptide); that stretch reads DQPRSPPSLR…RVDVGPVCFK (247 aa). Residues 1133–1366 form the Fibrillar collagen NC1 domain; the sequence is YEVDATLKSL…RVDVGPVCFK (234 aa). Disulfide bonds link C1163-C1195, C1203-C1364, and C1272-C1317. D1181, N1183, Q1184, C1186, and D1189 together coordinate Ca(2+).

It belongs to the fibrillar collagen family. As to quaternary structure, trimers of one alpha 2(I) and two alpha 1(I) chains. Interacts (via C-terminus) with TMEM131 (via PapD-L domain); the interaction is direct and is involved in assembly and TRAPPIII ER-to-Golgi transport complex-dependent secretion of collagen. In terms of processing, prolines at the third position of the tripeptide repeating unit (G-X-Y) are hydroxylated in some or all of the chains. As to expression, forms the fibrils of tendon, ligaments and bones. In bones the fibrils are mineralized with calcium hydroxyapatite.

It localises to the secreted. Its subcellular location is the extracellular space. It is found in the extracellular matrix. Type I collagen is a member of group I collagen (fibrillar forming collagen). This is Collagen alpha-2(I) chain (COL1A2) from Canis lupus familiaris (Dog).